A 920-amino-acid polypeptide reads, in one-letter code: Rho guanine nucleotide exchange factor 1 (920 aa).

The RGSL domain maps to 39–230; that stretch reads DQNSQFQSLE…SLYMRHLGVR (192 aa). Residues 231-404 form a disordered region; sequence TKSGDKKSGR…PGWRELVPPD (174 aa). The segment covering 281–311 has biased composition (basic and acidic residues); the sequence is DCRHLKVEADAEKPGPADRKGGLGMSSRDRT. Residues 364–380 are compositionally biased toward acidic residues; it reads STEDNGETESPEPGDDG. Phosphoserine occurs at positions 373, 386, 390, 408, and 412. Residues 415-604 form the DH domain; that stretch reads KRQEVISELL…REILHHVNQA (190 aa). Phosphothreonine occurs at positions 432 and 694. The PH domain maps to 646–759; the sequence is KLVHEGPLTW…WCNLITETAG (114 aa). Phosphotyrosine; by JAK2 is present on Tyr737. Disordered stretches follow at residues 764–797 and 840–864; these read PAPASRLKPRPSPSSIREPLLSSSENGTGGAEMA and TEEDSGAGPPRDGDGVPGGRAPGPV. Residues 865–894 adopt a coiled-coil conformation; that stretch reads HTQEIEENLLSLEVAIRQLEELEEEFCRLR. Ser905 bears the Phosphoserine mark.

As to quaternary structure, interacts with RHOA, GNA12 and GNA13. Homooligomerizes through the coiled coil region. Interacts with CTNNAL1. May interact with CCPG1. Phosphorylated by PKCA. Angiotensin-2 induced Tyr-737 phosphorylation is mediated by JAK2. Isoform 5 is phosphorylated at 'Ser-390'. Ubiquitously expressed.

The protein localises to the cytoplasm. The protein resides in the membrane. Seems to play a role in the regulation of RhoA GTPase by guanine nucleotide-binding alpha-12 (GNA12) and alpha-13 (GNA13) subunits. Acts as a GTPase-activating protein (GAP) for GNA12 and GNA13, and as guanine nucleotide exchange factor (GEF) for RhoA GTPase. Activated G alpha 13/GNA13 stimulates the RhoGEF activity through interaction with the RGS-like domain. This GEF activity is inhibited by binding to activated GNA12. Mediates angiotensin-2-induced RhoA activation. Isoform 3 and isoform 4 do not homooligomerize and show an enhanced RhoGEF activity. In lymphoid follicles, may trigger activation of GNA13 as part of S1PR2-dependent signaling pathway that leads to inhibition of germinal center (GC) B cell growth and migration outside the GC niche. In Mus musculus (Mouse), this protein is Rho guanine nucleotide exchange factor 1 (Arhgef1).